We begin with the raw amino-acid sequence, 1393 residues long: Rab3 GTPase-activating protein non-catalytic subunit (1393 aa).

Residues 36–67 (RDPSKSTDWEDDGWGAWEENEPQEPEEEGNTC) are disordered. Ser39 is subject to Phosphoserine. Positions 44–64 (WEDDGWGAWEENEPQEPEEEG) are enriched in acidic residues. Ser450 carries the post-translational modification Phosphoserine. Position 901 is a phosphothreonine (Thr901). Phosphoserine is present on residues Ser916 and Ser978.

Belongs to the Rab3-GAP regulatory subunit family. In terms of assembly, the Rab3 GTPase-activating complex is a heterodimer composed of RAB3GAP1 and RAB3GAP2. The Rab3 GTPase-activating complex interacts with DMXL2. Interacts with LMAN1. As to expression, ubiquitous.

The protein localises to the cytoplasm. It is found in the endoplasmic reticulum. In terms of biological role, regulatory subunit of the Rab3 GTPase-activating (Rab3GAP) complex composed of RAB3GAP1 and RAB3GAP2, which has GTPase-activating protein (GAP) activity towards various Rab3 subfamily members (RAB3A, RAB3B, RAB3C and RAB3D), RAB5A and RAB43, and guanine nucleotide exchange factor (GEF) activity towards RAB18. As part of the Rab3GAP complex, acts as a GAP for Rab3 proteins by converting active RAB3-GTP to the inactive form RAB3-GDP. Rab3 proteins are involved in regulated exocytosis of neurotransmitters and hormones. The Rab3GAP complex acts as a GEF for RAB18 by promoting the conversion of inactive RAB18-GDP to the active form RAB18-GTP. Recruits and stabilizes RAB18 at the cis-Golgi membrane in human fibroblasts where RAB18 is most likely activated. Also involved in RAB18 recruitment at the endoplasmic reticulum (ER) membrane where it maintains proper ER structure. Required for normal eye and brain development. May participate in neurodevelopmental processes such as proliferation, migration and differentiation before synapse formation, and non-synaptic vesicular release of neurotransmitters. This is Rab3 GTPase-activating protein non-catalytic subunit from Homo sapiens (Human).